The chain runs to 55 residues: Large ribosomal subunit protein bL33 (55 aa).

Belongs to the bacterial ribosomal protein bL33 family.

This Rhizobium johnstonii (strain DSM 114642 / LMG 32736 / 3841) (Rhizobium leguminosarum bv. viciae) protein is Large ribosomal subunit protein bL33.